An 840-amino-acid polypeptide reads, in one-letter code: Microcephalin (840 aa).

In terms of domain architecture, BRCT 1 spans 1–93 (MAAHILKDVV…AHIDESLFPA (93 aa)). Residues 184 to 206 (KEKRENLSPSSSQMIQQSHDNPS) are disordered. Polar residues predominate over residues 190-206 (LSPSSSQMIQQSHDNPS). Residues serine 279, serine 287, serine 296, and serine 333 each carry the phosphoserine modification. 2 disordered regions span residues 313–379 (PDQK…SIRR) and 418–437 (PDNL…QLPS). A Phosphothreonine modification is found at threonine 335. Over residues 355–378 (KRQRVSHGSHSPSKGKSKRKRSIR) the composition is skewed to basic residues. Residues 427-437 (ENLPPTSQLPS) show a composition bias toward polar residues. Serine 552 is modified (phosphoserine). Residues 562–586 (LKSTQNKGTTSKISNSSEGEAQSEH) form a disordered region. Positions 563–581 (KSTQNKGTTSKISNSSEGE) are enriched in polar residues. BRCT domains lie at 644–734 (SGRG…PFEL) and 755–837 (YRGT…NYLL).

In terms of assembly, interacts with CDC27 and maybe other components of the APC/C complex. Interacts with histone variant H2AX under DNA damage conditions.

The protein resides in the cytoplasm. The protein localises to the cytoskeleton. It localises to the microtubule organizing center. Its subcellular location is the centrosome. Its function is as follows. Implicated in chromosome condensation and DNA damage induced cellular responses. May play a role in neurogenesis and regulation of the size of the cerebral cortex. In Hylobates lar (Lar gibbon), this protein is Microcephalin.